A 139-amino-acid chain; its full sequence is Large ribosomal subunit protein uL16 (139 aa).

This sequence belongs to the universal ribosomal protein uL16 family. As to quaternary structure, part of the 50S ribosomal subunit.

In terms of biological role, binds 23S rRNA and is also seen to make contacts with the A and possibly P site tRNAs. The chain is Large ribosomal subunit protein uL16 from Treponema denticola (strain ATCC 35405 / DSM 14222 / CIP 103919 / JCM 8153 / KCTC 15104).